A 205-amino-acid polypeptide reads, in one-letter code: S-crystallin SL11 (205 aa).

Residues 2–80 enclose the GST N-terminal domain; sequence PSYTLYYFNG…YLAREFGFYG (79 aa). The GST C-terminal domain maps to 82 to 205; the sequence is NNMDMFKVDC…YIKKRNNTAF (124 aa).

This sequence belongs to the GST superfamily. In terms of tissue distribution, lens.

In terms of biological role, S-crystallins are structural components of squids and octopi eye lens. Contains relatively little if any GST activity. This chain is S-crystallin SL11, found in Nototodarus sloanii (Wellington flying squid).